A 448-amino-acid polypeptide reads, in one-letter code: Rhodanese-like domain-containing protein 8, chloroplastic (448 aa).

The N-terminal 23 residues, 1-23, are a transit peptide targeting the chloroplast; it reads MRVSPAATLSVSLTTPLPITLTK. One can recognise a Rhodanese domain in the interval 220 to 323; the sequence is SGKSYILLDV…YLKEEGTAEW (104 aa). Catalysis depends on cysteine 283, which acts as the Cysteine persulfide intermediate.

The protein resides in the plastid. The protein localises to the chloroplast. The polypeptide is Rhodanese-like domain-containing protein 8, chloroplastic (STR8) (Arabidopsis thaliana (Mouse-ear cress)).